A 95-amino-acid polypeptide reads, in one-letter code: Large ribosomal subunit protein bL25 (95 aa).

Belongs to the bacterial ribosomal protein bL25 family. Part of the 50S ribosomal subunit; part of the 5S rRNA/L5/L18/L25 subcomplex. Contacts the 5S rRNA. Binds to the 5S rRNA independently of L5 and L18.

Functionally, this is one of the proteins that binds to the 5S RNA in the ribosome where it forms part of the central protuberance. The sequence is that of Large ribosomal subunit protein bL25 from Haemophilus ducreyi (strain 35000HP / ATCC 700724).